Consider the following 118-residue polypeptide: DNA-binding protein Msm_0708 (118 aa).

Residues 16 to 39 form a disordered region; the sequence is EARQAAAQGQMQQQAQQQMQQQEA. The segment covering 18-39 has biased composition (low complexity); it reads RQAAAQGQMQQQAQQQMQQQEA.

This sequence belongs to the PDCD5 family.

The polypeptide is DNA-binding protein Msm_0708 (Methanobrevibacter smithii (strain ATCC 35061 / DSM 861 / OCM 144 / PS)).